A 529-amino-acid chain; its full sequence is Delayed-rectifier potassium channel regulatory subunit KCNS1 (529 aa).

At 1–217 (MLMLLVRGTH…LTMENPGYSL (217 aa)) the chain is on the cytoplasmic side. The chain crosses the membrane as a helical span at residues 218–239 (PSKLFSCVSIGVVLASIAAMCI). The Extracellular segment spans residues 240-270 (HSLPEYQAREAAAAVATVAAGRSAEDVRDDP). Residues 271–293 (VLRRLEYFCIAWFSFEVSSRLLL) form a helical membrane-spanning segment. Residues 294–304 (APSTRNFFCHP) are Cytoplasmic-facing. Residues 305 to 322 (LNLIDIVSVLPFYLTLLA) form a helical membrane-spanning segment. Residues 323 to 342 (SVALGGNNHGGTSGEELGHL) lie on the Extracellular side of the membrane. The chain crosses the membrane as a helical; Voltage-sensor span at residues 343–363 (GKVVQVFRLMRIFRVLKLARH). Over 364-378 (STGLRSLGATLKHSY) the chain is Cytoplasmic. A helical membrane pass occupies residues 379–400 (REVGILLLYLAVGVSVFSGVAY). Residues 401-413 (TAEKEEDVGFDTI) are Extracellular-facing. An intramembrane region (helical) is located at residues 414–425 (PACWWWGTVSMT). A Selectivity filter motif is present at residues 426-431 (TVGYGD). Residues 426–433 (TVGYGDVV) lie within the membrane without spanning it. Topologically, residues 434–440 (PVTLAGK) are extracellular. A helical membrane pass occupies residues 441-469 (LAASGCILGGILVVALPITIIFNKFSHFY). At 470–529 (QRQKALEAAVRNSGHREFEDLLSSVDGVSDASLETSRETSQEGRSADLEAPSESPKPQIY) the chain is on the cytoplasmic side. The disordered stretch occupies residues 498 to 529 (SDASLETSRETSQEGRSADLEAPSESPKPQIY). The span at 504 to 516 (TSRETSQEGRSAD) shows a compositional bias: basic and acidic residues.

The protein belongs to the potassium channel family. S (TC 1.A.1.2) subfamily. Kv9.1/KCNS1 sub-subfamily. In terms of assembly, heterotetramer with KCNB1. Heterotetramer with KCNB2. Does not form homomultimers.

The protein resides in the cell membrane. Potassium channel regulatory subunit that modulate the delayed rectifier voltage-gated potassium channel activity of KCNB1 and KCNB2 by altering their kinetics, expression levels, and shifting the half-inactivation potential to more polarized values. While it does not form functional channels on its own, it can form functional heterotetrameric channels with KCNB1 and KCNB2. Each regulatory subunit has unique regulatory properties that can lead to extensive inhibition, significant changes in kinetics, and/or substantial shifts in the voltage dependencies of the inactivation process. The polypeptide is Delayed-rectifier potassium channel regulatory subunit KCNS1 (Lemur catta (Ring-tailed lemur)).